Consider the following 345-residue polypeptide: Selenide, water dikinase (345 aa).

Cys-16 is a catalytic residue. ATP contacts are provided by residues Lys-19 and Thr-46–Asp-48. Asp-49 contributes to the Mg(2+) binding site. Residues Asp-66, Asp-89, and Gly-136–Thr-138 each bind ATP. Asp-89 contacts Mg(2+). Asp-224 serves as a coordination point for Mg(2+).

This sequence belongs to the selenophosphate synthase 1 family. Class I subfamily. As to quaternary structure, homodimer. Mg(2+) is required as a cofactor.

The catalysed reaction is hydrogenselenide + ATP + H2O = selenophosphate + AMP + phosphate + 2 H(+). Functionally, synthesizes selenophosphate from selenide and ATP. This chain is Selenide, water dikinase, found in Clostridium botulinum (strain Alaska E43 / Type E3).